We begin with the raw amino-acid sequence, 158 residues long: Rhombotin-2 (158 aa).

LIM zinc-binding domains lie at 30–89 (CGGC…RLFG) and 94–153 (CASC…EWTK).

As to quaternary structure, interacts via its LIM domains with ELF2 and LDB1. Interacts with BEX2 and KDM5A. Also interacts with basic helix-loop-helix protein TAL1/SCL and can assemble in a complex with LMO2 and TAL1/SCL.

The protein resides in the nucleus. Functionally, acts with TAL1/SCL to regulate red blood cell development. Also acts with LDB1 to maintain erythroid precursors in an immature state. In Bos taurus (Bovine), this protein is Rhombotin-2 (LMO2).